The chain runs to 78 residues: Protein SlyX homolog (78 aa).

It belongs to the SlyX family.

This Xanthomonas axonopodis pv. citri (strain 306) protein is Protein SlyX homolog.